The chain runs to 457 residues: Adenylosuccinate synthetase isozyme 2 (457 aa).

GTP-binding positions include 40–46 (GDEGKGK) and 68–70 (GHT). The active-site Proton acceptor is Asp41. Asp41 and Gly68 together coordinate Mg(2+). Asp41 lines the substrate pocket. IMP-binding positions include 41-44 (DEGK), 66-69 (NAGH), Thr163, Arg177, Asn256, Thr271, and Arg335. His69 serves as the catalytic Proton donor. Residue 331–337 (VTTGRKR) participates in substrate binding. GTP-binding positions include Arg337, 363-365 (KLD), and 445-448 (GVGK).

Belongs to the adenylosuccinate synthetase family. As to quaternary structure, homodimer. Mg(2+) serves as cofactor.

It is found in the cytoplasm. It localises to the mitochondrion. It catalyses the reaction IMP + L-aspartate + GTP = N(6)-(1,2-dicarboxyethyl)-AMP + GDP + phosphate + 2 H(+). It functions in the pathway purine metabolism; AMP biosynthesis via de novo pathway; AMP from IMP: step 1/2. With respect to regulation, inhibited competitively by AMP and IMP and non-competitively by fructose 1,6-bisphosphate. Functionally, plays an important role in the de novo pathway and in the salvage pathway of purine nucleotide biosynthesis. Catalyzes the first committed step in the biosynthesis of AMP from IMP. In Xenopus laevis (African clawed frog), this protein is Adenylosuccinate synthetase isozyme 2 (adss2).